Consider the following 638-residue polypeptide: MASGPNMEAPVCLVENENEELRVNSKAINILERITQPVVVVAIVGLYRTGKSYLMNRLAGQNHGFNLGTTVRSETKGIWMWCVPHPSKPKFTLVLLDTEGLGDVEKGDPKNDSWIFALAVLLSSTFVYNSMSTINHQALEQLHYVTELTERIRAKSTSRSEEVDDSDEFVSFFPDFIWTVRDFVLELKLEGRVITADEYLENALKLIPGMSIKAQKANLPRECIRHFFPRRKCFVFDRPTKDKELLVHVEEMPEDQLDHSFQVQSKEFCSYIFSNSKAKTLKEGIVVNGNRLATLVTTYVDAINSGDVPCLENAVTTLAQRENSIAVQKAADHYSEQMAQRMRLPTDTLQELLTVHTACEKEAIAVFMEHSFKDENQQFQKNLVVTIEEKKEDFLRQNEAASLSHCQAELDKLSESLRESISRGVFSVPGGHRLYLEARKKVEQDYERVPRKGVKANHVLQSFLQSQISIEDSIMQSDKALTDGQKAMEAERAQKEAAEKEQELLRQKQKELQQVMEAQERSYKENVAQLHEKMETERKNILREQEVKLEHKLKIQKDMLNEGFKRKCEAMDLEISQLQKEIQLNKEKNSSLGAKILDGFGDVLISVVPGSGKYFGLGLKILSSQMNQTQNSDKVRKL.

The segment at 1–310 (MASGPNMEAP…DAINSGDVPC (310 aa)) is GTPase domain (Globular). Positions 35 to 277 (TQPVVVVAIV…FCSYIFSNSK (243 aa)) constitute a GB1/RHD3-type G domain. GTP is bound by residues 45-52 (GLYRTGKS), 67-69 (LGT), and 97-101 (DTEGL). The tract at residues 311–638 (LENAVTTLAQ…TQNSDKVRKL (328 aa)) is interaction with the CYBA-CYBB complex. The tract at residues 590-638 (SSLGAKILDGFGDVLISVVPGSGKYFGLGLKILSSQMNQTQNSDKVRKL) is C-terminal tail; required for its localization to cytoplasmic vesicle.

It belongs to the TRAFAC class dynamin-like GTPase superfamily. GB1/RHD3 GTPase family. GB1 subfamily. In terms of assembly, monomer and dimer. Interacts with CYBA, CYBA-CYBB complex and ATG4B. Interacts (via GB1/RHD3-type G domain) with NCF2 and NCF2-NCF4 complex.

It localises to the cytoplasmic vesicle membrane. It carries out the reaction GTP + H2O = GDP + phosphate + H(+). The catalysed reaction is GDP + H2O = GMP + phosphate + H(+). With respect to regulation, inhibited by orthovanadate, berylium fluoride and aluminum flouride. Functionally, interferon (IFN)-inducible GTPase that plays important roles in innate immunity against a diverse range of bacterial, viral and protozoan pathogens. Hydrolyzes GTP to GMP in two consecutive cleavage reactions and predominantly uses GTP and not GDP or GMP as the substrate. Following infection, recruited to the pathogen-containing vacuoles or vacuole-escaped bacteria and acts as a positive regulator of inflammasome assembly by promoting the release of inflammasome ligands from bacteria. Acts by promoting lysis of pathogen-containing vacuoles, releasing pathogens into the cytosol. Following pathogen release in the cytosol, promotes recruitment of proteins that mediate bacterial cytolysis, such as Gm12250/Irgb10: this liberates ligands that are detected by inflammasomes, such as lipopolysaccharide (LPS) that activates the non-canonical CASP4/CASP11 inflammasome or double-stranded DNA (dsDNA) that activates the AIM2 inflammasome. Also promotes IFN-gamma-mediated host defense against bacterial infections by regulating oxidative responses and bacteriolytic peptide generation. May help to assemble NADPH oxidase on phagosomal membranes by acting as a bridging protein between NADPH oxidase cytosolic subunits NCF2-NCF4 and the membrane subunits CYBA-CYBB. Participates along with GBP1 in trafficking monoubiquinated protein cargo to autolysosomes for generating ubiquitin-derived antimicrobial peptides. Facilitates influenza A virus replication by inhibiting the activation of NF-kappaB and JAK-STAT signaling pathways and the expression of type I, type III interferons and pro-inflammatory cytokines. Confers protection to several pathogens, including the bacterial pathogens Listeria monocytogenes and Mycobacterium bovis BCG as well as the protozoan pathogen Toxoplasma gondii. Required for disruption of the parasitophorous vacuole formed following T.gondii infection and subsequent killing of the parasite. This chain is Guanylate-binding protein 7 (Gbp7), found in Mus musculus (Mouse).